The sequence spans 135 residues: Small ribosomal subunit protein uS8 (135 aa).

This sequence belongs to the universal ribosomal protein uS8 family. As to quaternary structure, part of the 30S ribosomal subunit. Contacts proteins S5 and S12.

Functionally, one of the primary rRNA binding proteins, it binds directly to 16S rRNA central domain where it helps coordinate assembly of the platform of the 30S subunit. In Nocardioides sp. (strain ATCC BAA-499 / JS614), this protein is Small ribosomal subunit protein uS8.